A 195-amino-acid polypeptide reads, in one-letter code: Peptidyl-tRNA hydrolase (195 aa).

Residue Y17 coordinates tRNA. H22 functions as the Proton acceptor in the catalytic mechanism. TRNA is bound by residues Y68, N70, and N116.

This sequence belongs to the PTH family. As to quaternary structure, monomer.

The protein resides in the cytoplasm. The catalysed reaction is an N-acyl-L-alpha-aminoacyl-tRNA + H2O = an N-acyl-L-amino acid + a tRNA + H(+). Hydrolyzes ribosome-free peptidyl-tRNAs (with 1 or more amino acids incorporated), which drop off the ribosome during protein synthesis, or as a result of ribosome stalling. In terms of biological role, catalyzes the release of premature peptidyl moieties from peptidyl-tRNA molecules trapped in stalled 50S ribosomal subunits, and thus maintains levels of free tRNAs and 50S ribosomes. The protein is Peptidyl-tRNA hydrolase of Shewanella putrefaciens (strain CN-32 / ATCC BAA-453).